The chain runs to 309 residues: Golgi-associated RAB2 interactor protein 1A (309 aa).

Phosphoserine occurs at positions 231, 263, and 267.

Belongs to the GARIN family. In terms of assembly, interacts (via N-terminus) with RAB2B (in GTP-bound form).

The protein localises to the golgi apparatus. Functionally, RAB2B effector protein required for accurate acrosome formation and normal male fertility. This Homo sapiens (Human) protein is Golgi-associated RAB2 interactor protein 1A.